Here is a 344-residue protein sequence, read N- to C-terminus: Tryptophan--tRNA ligase (344 aa).

ATP contacts are provided by residues 20–22 (QPS) and 28–29 (GN). Positions 21-29 (PSGALHLGN) match the 'HIGH' region motif. D144 serves as a coordination point for L-tryptophan. ATP-binding positions include 156 to 158 (GED), V197, and 206 to 210 (KMSKS). The short motif at 206–210 (KMSKS) is the 'KMSKS' region element.

It belongs to the class-I aminoacyl-tRNA synthetase family. Homodimer.

The protein localises to the cytoplasm. The catalysed reaction is tRNA(Trp) + L-tryptophan + ATP = L-tryptophyl-tRNA(Trp) + AMP + diphosphate + H(+). Its function is as follows. Catalyzes the attachment of tryptophan to tRNA(Trp). The sequence is that of Tryptophan--tRNA ligase from Caulobacter vibrioides (strain ATCC 19089 / CIP 103742 / CB 15) (Caulobacter crescentus).